The chain runs to 203 residues: Holliday junction branch migration complex subunit RuvA (203 aa).

Residues 1-63 (MIDYLRGTLT…EDVIRLYGFR (63 aa)) are domain I. The segment at 64-142 (TKEKRSLFEK…ELHPGLFSQK (79 aa)) is domain II. Positions 143-152 (EEQPKPHEKN) are flexible linker. A domain III region spans residues 153 to 203 (DGNQALDEAMEALKALGYVEKELKKVKPKLEQETLTTDAYIKKALQLMLNR).

This sequence belongs to the RuvA family. In terms of assembly, homotetramer. Forms an RuvA(8)-RuvB(12)-Holliday junction (HJ) complex. HJ DNA is sandwiched between 2 RuvA tetramers; dsDNA enters through RuvA and exits via RuvB. An RuvB hexamer assembles on each DNA strand where it exits the tetramer. Each RuvB hexamer is contacted by two RuvA subunits (via domain III) on 2 adjacent RuvB subunits; this complex drives branch migration. In the full resolvosome a probable DNA-RuvA(4)-RuvB(12)-RuvC(2) complex forms which resolves the HJ.

It localises to the cytoplasm. In terms of biological role, the RuvA-RuvB-RuvC complex processes Holliday junction (HJ) DNA during genetic recombination and DNA repair, while the RuvA-RuvB complex plays an important role in the rescue of blocked DNA replication forks via replication fork reversal (RFR). RuvA specifically binds to HJ cruciform DNA, conferring on it an open structure. The RuvB hexamer acts as an ATP-dependent pump, pulling dsDNA into and through the RuvAB complex. HJ branch migration allows RuvC to scan DNA until it finds its consensus sequence, where it cleaves and resolves the cruciform DNA. The polypeptide is Holliday junction branch migration complex subunit RuvA (Halalkalibacterium halodurans (strain ATCC BAA-125 / DSM 18197 / FERM 7344 / JCM 9153 / C-125) (Bacillus halodurans)).